The sequence spans 474 residues: Citrate synthase, mitochondrial (474 aa).

The N-terminal 35 residues, 1–35 (MASTLRLSTSALRSSTLAGKPVVQSVAFNGLRCYS), are a transit peptide targeting the mitochondrion. Active-site residues include His-310, His-356, and Asp-411.

Belongs to the citrate synthase family.

The protein resides in the mitochondrion matrix. The enzyme catalyses oxaloacetate + acetyl-CoA + H2O = citrate + CoA + H(+). Its pathway is carbohydrate metabolism; tricarboxylic acid cycle; isocitrate from oxaloacetate: step 1/2. This is Citrate synthase, mitochondrial (citA) from Emericella nidulans (strain FGSC A4 / ATCC 38163 / CBS 112.46 / NRRL 194 / M139) (Aspergillus nidulans).